Reading from the N-terminus, the 160-residue chain is Nutritionally-regulated adipose and cardiac enriched protein homolog (160 aa).

Positions 1–69 (MRTAAGAVSP…AKPQRTSRRV (69 aa)) are disordered. Composition is skewed to basic and acidic residues over residues 12–25 (SRPETRRQTRKNEE) and 33–42 (CRAEREDNRK). The helical transmembrane segment at 101 to 121 (GGSLLLQLCVCVLLVLALGLY) threads the bilayer.

It is found in the cell membrane. This Homo sapiens (Human) protein is Nutritionally-regulated adipose and cardiac enriched protein homolog (NRAC).